Consider the following 175-residue polypeptide: Glycine-rich RNA-binding protein 1 (175 aa).

Residues 3 to 81 (AKVYVGNLSW…RRIRVNMANS (79 aa)) enclose the RRM domain. The interval 114–175 (GQPGGFQQPG…GYGGYNGQSQ (62 aa)) is disordered. Over residues 122–131 (PGGFQQQGGY) the composition is skewed to low complexity. Gly residues predominate over residues 132–141 (PQQGGYGGYQ). The span at 142–162 (QPGFQPQQGGYGAPQQGYGAP) shows a compositional bias: low complexity. Gly residues predominate over residues 163–175 (QQGGYGGYNGQSQ).

Belongs to the glycine-rich RNA-binding protein family. Part of large ribonucleoprotein complexes (mRNPs) containing RNA-binding proteins RRM4 and PAB1, endosome-binding protein UPA1, core scaffold protein UPA2 and associated factor GRP1.

It is found in the endosome. In terms of biological role, component of endosomal mRNA transport that regulates polarity of the infectious hyphae by transporting a broad spectrum of cargo mRNAs from the nucleus to cell poles. The sequence is that of Glycine-rich RNA-binding protein 1 from Mycosarcoma maydis (Corn smut fungus).